Reading from the N-terminus, the 508-residue chain is MVNTNIRPDEISSSIRKEIEGYTQEVKVVNVGTVLQVGDGIARIYGLDKVMAGELVEFEDGTVGIALNSESDNVGAVLMGDGLTIQEGSSVKATGKIAQIPVSDAYLGRVVNALAQPIDGKGQIPASESRPIESPAPGIISRRSVYEPMQTGLIAIDSMIPIGRGQRELIIGDRQTGKTAVATDTILNQKGQNVICVYVAIGQKASSVAQVVNTFEERGAMEYTIVVAEAANSPATLQYLAPYTGAALAEYFMYRKQHTLIIYDDLSKQAQAYRQMSLLLRRPPGREAYPGDVFYLHSRLLERAAKSSSQLGEGSMTASPIVETQAGDVSAYIPTNVISITDGQIFLSADSFNAGIRPAINVGISVSRVGSAAQIKAMKQVAGKLKLELAQFAELEAFAQFASDLDKATQNQLARGQRLRELLKQSQSAPLAVEEQVATIYTGVNGFSDKLKVEQVKRFLVQLREYITTNKPQFGEIIRSTKMFTEQAENILKEAIEEHIELFLLQEK.

Residue glycine 172 to threonine 179 coordinates ATP.

It belongs to the ATPase alpha/beta chains family. As to quaternary structure, F-type ATPases have 2 components, CF(1) - the catalytic core - and CF(0) - the membrane proton channel. CF(1) has five subunits: alpha(3), beta(3), gamma(1), delta(1), epsilon(1). CF(0) has four main subunits: a, b, b' and c.

It localises to the plastid. Its subcellular location is the chloroplast thylakoid membrane. It carries out the reaction ATP + H2O + 4 H(+)(in) = ADP + phosphate + 5 H(+)(out). Produces ATP from ADP in the presence of a proton gradient across the membrane. The alpha chain is a regulatory subunit. This is ATP synthase subunit alpha, chloroplastic from Angiopteris evecta (Mule's foot fern).